Here is a 480-residue protein sequence, read N- to C-terminus: Glycogen synthase 1 (480 aa).

Lysine 15 serves as a coordination point for ADP-alpha-D-glucose.

Belongs to the glycosyltransferase 1 family. Bacterial/plant glycogen synthase subfamily.

It carries out the reaction [(1-&gt;4)-alpha-D-glucosyl](n) + ADP-alpha-D-glucose = [(1-&gt;4)-alpha-D-glucosyl](n+1) + ADP + H(+). The protein operates within glycan biosynthesis; glycogen biosynthesis. Functionally, synthesizes alpha-1,4-glucan chains using ADP-glucose. In Rhizobium radiobacter (Agrobacterium tumefaciens), this protein is Glycogen synthase 1 (glgA1).